A 398-amino-acid chain; its full sequence is Stearoyl-[acyl-carrier-protein] 9-desaturase, chloroplastic (398 aa).

The N-terminal 34 residues, 1-34 (MALKLNPLASQPYNFPSSARPPISTFRSPKFLCL), are a transit peptide targeting the chloroplast. Fe cation is bound by residues E140, E178, H181, E231, E264, and H267.

This sequence belongs to the fatty acid desaturase type 2 family. In terms of assembly, homodimer. Requires Fe(2+) as cofactor.

It is found in the plastid. The protein localises to the chloroplast. It catalyses the reaction octadecanoyl-[ACP] + 2 reduced [2Fe-2S]-[ferredoxin] + O2 + 2 H(+) = (9Z)-octadecenoyl-[ACP] + 2 oxidized [2Fe-2S]-[ferredoxin] + 2 H2O. Its pathway is lipid metabolism; fatty acid metabolism. Functionally, converts stearoyl-ACP to oleoyl-ACP by introduction of a cis double bond between carbons 9 and 10 of the acyl chain. The sequence is that of Stearoyl-[acyl-carrier-protein] 9-desaturase, chloroplastic from Brassica napus (Rape).